The following is a 167-amino-acid chain: Calcium-binding protein CML19 (167 aa).

EF-hand domains lie at 23–58, 59–94, 96–131, and 132–167; these read QKRR…LGFE, MNNQ…KFGE, DSID…LGEN, and FTDN…TSYG. Ca(2+)-binding residues include D36, D38, S40, S42, E47, D72, N74, S76, E83, D109, D111, N113, K115, D120, D145, D147, D149, E151, and E156.

Belongs to the centrin family. In terms of assembly, interacts with RAD4. Calcium is required for this interaction. Interacts with SAC3B. In terms of tissue distribution, expressed in leaves, roots, and at lower level in stems. Barely detectable in flower buds and flowers.

Its subcellular location is the cytoplasm. The protein localises to the nucleus. Potential calcium sensor that binds calcium in vitro. Modulates homologous recombination and nucleotide excision repair (NER). Involved in the early response to UV irradiation. In Arabidopsis thaliana (Mouse-ear cress), this protein is Calcium-binding protein CML19.